Here is a 214-residue protein sequence, read N- to C-terminus: Killer cell lectin-like receptor subfamily B member 1 (214 aa).

Residues 1–42 are Cytoplasmic-facing; it reads MDAPVLYAELHLANTQGLRCTSPPSPRQDACWGSGWHRVALK. A helical; Signal-anchor for type II membrane protein transmembrane segment spans residues 43–63; sequence LGCVGLILLLMGLSVLVGFLV. The Extracellular portion of the chain corresponds to 64-214; the sequence is QKPPIEKCSV…WICQKTLKRV (151 aa). The C-type lectin domain maps to 98–208; the sequence is HWNKCLFISQ…CSSDNHWICQ (111 aa). 2 cysteine pairs are disulfide-bonded: Cys-119–Cys-207 and Cys-186–Cys-199.

Its subcellular location is the membrane. This Rattus norvegicus (Rat) protein is Killer cell lectin-like receptor subfamily B member 1 (Klrb1).